Consider the following 276-residue polypeptide: Elongation factor Ts, mitochondrial (276 aa).

The protein belongs to the EF-Ts family.

The protein resides in the mitochondrion. Associates with the EF-Tu.GDP complex and induces the exchange of GDP to GTP. It remains bound to the aminoacyl-tRNA.EF-Tu.GTP complex up to the GTP hydrolysis stage on the ribosome. The polypeptide is Elongation factor Ts, mitochondrial (Leishmania braziliensis).